A 228-amino-acid chain; its full sequence is MSPSCSSCVNVLLIMCLMLLSLSADAYKNYTVGESTGWFDIQERPSANYQKWADSKSFSLGDFLIFNTDSNHSVVQTYDFKTYKDCDYDNNENNDTTEWSAANPSATSPVPVSISVPLVKEGSNYFFSGNYDGEQCKFGQHFMINVTHGQGLPDSSSPDDAAAPGPSESSQSGDDEVAPDTIVPANFDHPKDIESADDDKEVHSKKSSSSTTKTSLFCFVFMGLFASF.

A signal peptide spans 1–26 (MSPSCSSCVNVLLIMCLMLLSLSADA). Positions 28–148 (KNYTVGESTG…GQHFMINVTH (121 aa)) constitute a Phytocyanin domain. N-linked (GlcNAc...) asparagine glycans are attached at residues Asn29, Asn71, Asn94, and Asn145. A disulfide bond links Cys86 and Cys136. The disordered stretch occupies residues 148-211 (HGQGLPDSSS…VHSKKSSSST (64 aa)). A compositionally biased stretch (low complexity) spans 153 to 170 (PDSSSPDDAAAPGPSESS). The segment covering 188–204 (DHPKDIESADDDKEVHS) has biased composition (basic and acidic residues). The GPI-anchor amidated serine moiety is linked to residue Ser204. Residues 205-228 (KKSSSSTTKTSLFCFVFMGLFASF) constitute a propeptide, removed in mature form.

It belongs to the early nodulin-like (ENODL) family. Mostly expressed in seedlings, roots and flowers, and, to a lower extent, in leaves, stems and seeds.

The protein resides in the cell membrane. In terms of biological role, may act as a carbohydrate transporter. This chain is Early nodulin-like protein 18, found in Arabidopsis thaliana (Mouse-ear cress).